Consider the following 185-residue polypeptide: UPF0301 protein HCH_00550 (185 aa).

Belongs to the UPF0301 (AlgH) family.

The sequence is that of UPF0301 protein HCH_00550 from Hahella chejuensis (strain KCTC 2396).